We begin with the raw amino-acid sequence, 132 residues long: Small ribosomal subunit protein uS11 (132 aa).

It belongs to the universal ribosomal protein uS11 family. As to quaternary structure, part of the 30S ribosomal subunit. Interacts with proteins S7 and S18. Binds to IF-3.

Its function is as follows. Located on the platform of the 30S subunit, it bridges several disparate RNA helices of the 16S rRNA. Forms part of the Shine-Dalgarno cleft in the 70S ribosome. This chain is Small ribosomal subunit protein uS11, found in Alcanivorax borkumensis (strain ATCC 700651 / DSM 11573 / NCIMB 13689 / SK2).